Reading from the N-terminus, the 1271-residue chain is DNA-directed RNA polymerase subunit beta (1271 aa).

The protein belongs to the RNA polymerase beta chain family. The RNAP catalytic core consists of 2 alpha, 1 beta, 1 beta' and 1 omega subunit. When a sigma factor is associated with the core the holoenzyme is formed, which can initiate transcription.

The enzyme catalyses RNA(n) + a ribonucleoside 5'-triphosphate = RNA(n+1) + diphosphate. Functionally, DNA-dependent RNA polymerase catalyzes the transcription of DNA into RNA using the four ribonucleoside triphosphates as substrates. The chain is DNA-directed RNA polymerase subunit beta from Acholeplasma laidlawii (strain PG-8A).